Consider the following 122-residue polypeptide: Large ribosomal subunit protein uL14 (122 aa).

This sequence belongs to the universal ribosomal protein uL14 family. Part of the 50S ribosomal subunit. Forms a cluster with proteins L3 and L19. In the 70S ribosome, L14 and L19 interact and together make contacts with the 16S rRNA in bridges B5 and B8.

In terms of biological role, binds to 23S rRNA. Forms part of two intersubunit bridges in the 70S ribosome. The polypeptide is Large ribosomal subunit protein uL14 (Streptococcus uberis (strain ATCC BAA-854 / 0140J)).